A 156-amino-acid polypeptide reads, in one-letter code: MQFTLSAVVLALAGFSAALPAESMNNGLQHQNGTPRFPVPDSLTIEQAQAKCGDQAQLSCCNKATYAGDTTDINSGILGGTLSNLIGAGSGASGLGLFDQCSKLGAQIPIVIGIPIQDILNQQCKQNIACCANSPSTASGNLVGAALPCVALGSIL.

An N-terminal signal peptide occupies residues 1–18; the sequence is MQFTLSAVVLALAGFSAA. 4 disulfides stabilise this stretch: Cys52–Cys130, Cys60–Cys124, Cys61–Cys101, and Cys131–Cys149.

The protein belongs to the fungal hydrophobin family.

The protein localises to the secreted. It is found in the cell wall. Aerial growth, conidiation, and dispersal of filamentous fungi in the environment rely upon a capability of their secreting small amphipathic proteins called hydrophobins (HPBs) with low sequence identity. Class I can self-assemble into an outermost layer of rodlet bundles on aerial cell surfaces, conferring cellular hydrophobicity that supports fungal growth, development and dispersal; whereas Class II form highly ordered films at water-air interfaces through intermolecular interactions but contribute nothing to the rodlet structure. In P.expansum, hydrophobins contribute to germination, tolerance to cold stress and mycotoxins patulin and citrinin production. HfbA and HfbB are essential for fungal surface hydrophobicity. The protein is Class I hydrophobin B of Penicillium expansum (Blue mold rot fungus).